The primary structure comprises 370 residues: GTPase Obg (370 aa).

The region spanning 1–159 is the Obg domain; the sequence is MKFVDEAYID…KKLKLELRVL (159 aa). The OBG-type G domain maps to 160-333; sequence ADVGLLGMPN…LVQAIYQHVA (174 aa). GTP is bound by residues 166–173, 191–195, 213–216, 283–286, and 314–316; these read GMPNAGKS, FTTLH, DVPG, NKLD, and SAL. Positions 173 and 193 each coordinate Mg(2+). The tract at residues 346 to 370 is disordered; that stretch reads FAEPEADESDDEPRFAPQADDPRFR.

This sequence belongs to the TRAFAC class OBG-HflX-like GTPase superfamily. OBG GTPase family. In terms of assembly, monomer. The cofactor is Mg(2+).

It localises to the cytoplasm. An essential GTPase which binds GTP, GDP and possibly (p)ppGpp with moderate affinity, with high nucleotide exchange rates and a fairly low GTP hydrolysis rate. Plays a role in control of the cell cycle, stress response, ribosome biogenesis and in those bacteria that undergo differentiation, in morphogenesis control. The polypeptide is GTPase Obg (Methylibium petroleiphilum (strain ATCC BAA-1232 / LMG 22953 / PM1)).